Here is a 62-residue protein sequence, read N- to C-terminus: Photosystem II reaction center protein Z (62 aa).

2 helical membrane-spanning segments follow: residues 8–28 (AVFA…VVFA) and 41–61 (FSGT…NSLI).

The protein belongs to the PsbZ family. PSII is composed of 1 copy each of membrane proteins PsbA, PsbB, PsbC, PsbD, PsbE, PsbF, PsbH, PsbI, PsbJ, PsbK, PsbL, PsbM, PsbT, PsbY, PsbZ, Psb30/Ycf12, at least 3 peripheral proteins of the oxygen-evolving complex and a large number of cofactors. It forms dimeric complexes.

It localises to the plastid. The protein resides in the chloroplast thylakoid membrane. May control the interaction of photosystem II (PSII) cores with the light-harvesting antenna, regulates electron flow through the 2 photosystem reaction centers. PSII is a light-driven water plastoquinone oxidoreductase, using light energy to abstract electrons from H(2)O, generating a proton gradient subsequently used for ATP formation. This is Photosystem II reaction center protein Z from Phalaenopsis aphrodite subsp. formosana (Moth orchid).